The following is a 387-amino-acid chain: Sedoheptulose-1,7-bisphosphatase, chloroplastic (387 aa).

A disulfide bridge links C109 with C114. Mg(2+) is bound by residues D120, E149, D170, L172, and D173. Residues 173 to 176, Y284, and K314 each bind substrate; that span reads DGSS. E320 lines the Mg(2+) pocket.

Belongs to the FBPase class 1 family. Homodimer. It depends on Mg(2+) as a cofactor.

It is found in the plastid. It localises to the chloroplast. It catalyses the reaction D-sedoheptulose 1,7-bisphosphate + H2O = D-sedoheptulose 7-phosphate + phosphate. The protein operates within carbohydrate biosynthesis; Calvin cycle. This Spinacia oleracea (Spinach) protein is Sedoheptulose-1,7-bisphosphatase, chloroplastic.